The chain runs to 310 residues: Methionyl-tRNA formyltransferase (310 aa).

110 to 113 (SVLP) is a (6S)-5,6,7,8-tetrahydrofolate binding site.

Belongs to the Fmt family.

The catalysed reaction is L-methionyl-tRNA(fMet) + (6R)-10-formyltetrahydrofolate = N-formyl-L-methionyl-tRNA(fMet) + (6S)-5,6,7,8-tetrahydrofolate + H(+). Functionally, attaches a formyl group to the free amino group of methionyl-tRNA(fMet). The formyl group appears to play a dual role in the initiator identity of N-formylmethionyl-tRNA by promoting its recognition by IF2 and preventing the misappropriation of this tRNA by the elongation apparatus. This is Methionyl-tRNA formyltransferase from Mycolicibacterium vanbaalenii (strain DSM 7251 / JCM 13017 / BCRC 16820 / KCTC 9966 / NRRL B-24157 / PYR-1) (Mycobacterium vanbaalenii).